The sequence spans 195 residues: Shikimate kinase (195 aa).

An ATP-binding site is contributed by 26-31; that stretch reads GSGKST. A Mg(2+)-binding site is contributed by S30. Substrate-binding residues include D48, R72, and G94. Residue R132 participates in ATP binding. R151 provides a ligand contact to substrate.

This sequence belongs to the shikimate kinase family. As to quaternary structure, monomer. It depends on Mg(2+) as a cofactor.

The protein resides in the cytoplasm. It carries out the reaction shikimate + ATP = 3-phosphoshikimate + ADP + H(+). It participates in metabolic intermediate biosynthesis; chorismate biosynthesis; chorismate from D-erythrose 4-phosphate and phosphoenolpyruvate: step 5/7. Its function is as follows. Catalyzes the specific phosphorylation of the 3-hydroxyl group of shikimic acid using ATP as a cosubstrate. The protein is Shikimate kinase of Synechococcus sp. (strain RCC307).